Reading from the N-terminus, the 258-residue chain is MSLKSSAKVALSLMDLTTLNDNATDEKVIALCQQGNTEFGTPAAVCVYPRFVPVARKALKAQQTEQVKIATVTNFPHGNDDIDIAVTETKAAIAYGADEVDVVFPYKALMAGNEQVGFELVKQCKAVCQASGVLLKVIIETGELKTPALIRKASELAIQAGADFIKTSTGKVAINATLESARIMLETIRDLNVAEKVGFKAAGGVKTTEEAEQYLALAKTILGEDWVNSAHFRFGASSLLNNLLATLNDQTAQVVTGY.

Asp-101 (proton donor/acceptor) is an active-site residue. The active-site Schiff-base intermediate with acetaldehyde is Lys-166. Residue Lys-200 is the Proton donor/acceptor of the active site.

Belongs to the DeoC/FbaB aldolase family. DeoC type 2 subfamily.

Its subcellular location is the cytoplasm. The enzyme catalyses 2-deoxy-D-ribose 5-phosphate = D-glyceraldehyde 3-phosphate + acetaldehyde. It participates in carbohydrate degradation; 2-deoxy-D-ribose 1-phosphate degradation; D-glyceraldehyde 3-phosphate and acetaldehyde from 2-deoxy-alpha-D-ribose 1-phosphate: step 2/2. In terms of biological role, catalyzes a reversible aldol reaction between acetaldehyde and D-glyceraldehyde 3-phosphate to generate 2-deoxy-D-ribose 5-phosphate. The protein is Deoxyribose-phosphate aldolase of Haemophilus ducreyi (strain 35000HP / ATCC 700724).